The sequence spans 125 residues: Protein ApaG (125 aa).

One can recognise an ApaG domain in the interval 1–125 (MIDAPRIIVQ…FRLAIPSLIN (125 aa)).

The protein is Protein ApaG of Edwardsiella ictaluri (strain 93-146).